Consider the following 245-residue polypeptide: E3 ubiquitin-protein ligase RNF138 (245 aa).

A2 carries the N-acetylalanine modification. Residues 18-58 (CPVCQEVLKTPVRTTACQHVFCRKCFLTAMRESGAHCPLCR) form an RING-type zinc finger. 4 residues coordinate Zn(2+): C86, C89, H101, and C105. The C2HC RNF-type zinc finger occupies 86–105 (CRCCAKQIKFYRMRHHYKSC). The segment at 125 to 154 (QDSVGNSNRSETSTSDNTETYQENTSSSGH) is disordered. Position 142 is a phosphothreonine (T142). 2 consecutive C2H2-type zinc fingers follow at residues 157-180 (FKCP…NSNH) and 187-215 (VTCP…NQRH). The UIM domain maps to 225–243 (LQLDEETQYQTAVEESFQV).

Interacts with NLK. Interacts with XRCC5/Ku80. Interacts with RBBP8/CtIP. Auto-ubiquitinated.

Its subcellular location is the chromosome. The catalysed reaction is S-ubiquitinyl-[E2 ubiquitin-conjugating enzyme]-L-cysteine + [acceptor protein]-L-lysine = [E2 ubiquitin-conjugating enzyme]-L-cysteine + N(6)-ubiquitinyl-[acceptor protein]-L-lysine.. It participates in protein modification; protein ubiquitination. E3 ubiquitin-protein ligase involved in DNA damage response by promoting DNA resection and homologous recombination. Recruited to sites of double-strand breaks following DNA damage and specifically promotes double-strand break repair via homologous recombination. Two different, non-exclusive, mechanisms have been proposed. According to a report, regulates the choice of double-strand break repair by favoring homologous recombination over non-homologous end joining (NHEJ): acts by mediating ubiquitination of XRCC5/Ku80, leading to remove the Ku complex from DNA breaks, thereby promoting homologous recombination. According to another report, cooperates with UBE2Ds E2 ubiquitin ligases (UBE2D1, UBE2D2, UBE2D3 or UBE2D4) to promote homologous recombination by mediating ubiquitination of RBBP8/CtIP. Together with NLK, involved in the ubiquitination and degradation of TCF/LEF. Also exhibits auto-ubiquitination activity in combination with UBE2K. May act as a negative regulator in the Wnt/beta-catenin-mediated signaling pathway. This chain is E3 ubiquitin-protein ligase RNF138, found in Homo sapiens (Human).